Consider the following 393-residue polypeptide: Double-stranded RNA-binding protein 5 (393 aa).

DRBM domains lie at 1–70 (MYKN…VLSS) and 87–155 (IYKN…SLKK). Disordered stretches follow at residues 220–251 (ASSS…KSSK) and 335–371 (NPNL…QEKK). The span at 347–361 (VNEFTSSNNSCSVLN) shows a compositional bias: polar residues.

As to quaternary structure, heterodimer with DRB1, DRB2 or DRB4. Interacts with DCL1 and DCL3. Expressed in the shoot apical meristem (SAM).

Functionally, binds double-stranded RNA. May be involved in RNA-mediated silencing. The sequence is that of Double-stranded RNA-binding protein 5 (DRB5) from Arabidopsis thaliana (Mouse-ear cress).